The sequence spans 358 residues: Uroporphyrinogen decarboxylase (358 aa).

Substrate contacts are provided by residues 29 to 33, F48, D79, Y155, S210, and H330; that span reads RQAGR.

It belongs to the uroporphyrinogen decarboxylase family. As to quaternary structure, homodimer.

It localises to the cytoplasm. The enzyme catalyses uroporphyrinogen III + 4 H(+) = coproporphyrinogen III + 4 CO2. Its pathway is porphyrin-containing compound metabolism; protoporphyrin-IX biosynthesis; coproporphyrinogen-III from 5-aminolevulinate: step 4/4. In terms of biological role, catalyzes the decarboxylation of four acetate groups of uroporphyrinogen-III to yield coproporphyrinogen-III. This chain is Uroporphyrinogen decarboxylase, found in Bordetella bronchiseptica (strain ATCC BAA-588 / NCTC 13252 / RB50) (Alcaligenes bronchisepticus).